An 876-amino-acid chain; its full sequence is Leucine--tRNA ligase (876 aa).

Residues 42–52 (PYPSGKLHMGH) carry the 'HIGH' region motif. The short motif at 634 to 638 (KMSKS) is the 'KMSKS' region element. Lys637 contacts ATP.

The protein belongs to the class-I aminoacyl-tRNA synthetase family.

It localises to the cytoplasm. It catalyses the reaction tRNA(Leu) + L-leucine + ATP = L-leucyl-tRNA(Leu) + AMP + diphosphate. The chain is Leucine--tRNA ligase from Neisseria meningitidis serogroup B (strain ATCC BAA-335 / MC58).